Consider the following 120-residue polypeptide: Flagellar transcriptional regulator FlhD (120 aa).

It belongs to the FlhD family. As to quaternary structure, homodimer; disulfide-linked. Forms a heterohexamer composed of two FlhC and four FlhD subunits. Each FlhC binds a FlhD dimer, forming a heterotrimer, and a hexamer assembles by dimerization of two heterotrimers.

It localises to the cytoplasm. Functionally, functions in complex with FlhC as a master transcriptional regulator that regulates transcription of several flagellar and non-flagellar operons by binding to their promoter region. Activates expression of class 2 flagellar genes, including fliA, which is a flagellum-specific sigma factor that turns on the class 3 genes. Also regulates genes whose products function in a variety of physiological pathways. In Erwinia tasmaniensis (strain DSM 17950 / CFBP 7177 / CIP 109463 / NCPPB 4357 / Et1/99), this protein is Flagellar transcriptional regulator FlhD.